We begin with the raw amino-acid sequence, 72 residues long: Translation initiation factor IF-1 (72 aa).

Residues 1 to 72 (MSKEGKITLK…TRGRIIYRIS (72 aa)) enclose the S1-like domain.

It belongs to the IF-1 family. Component of the 30S ribosomal translation pre-initiation complex which assembles on the 30S ribosome in the order IF-2 and IF-3, IF-1 and N-formylmethionyl-tRNA(fMet); mRNA recruitment can occur at any time during PIC assembly.

The protein localises to the cytoplasm. Its function is as follows. One of the essential components for the initiation of protein synthesis. Stabilizes the binding of IF-2 and IF-3 on the 30S subunit to which N-formylmethionyl-tRNA(fMet) subsequently binds. Helps modulate mRNA selection, yielding the 30S pre-initiation complex (PIC). Upon addition of the 50S ribosomal subunit IF-1, IF-2 and IF-3 are released leaving the mature 70S translation initiation complex. The sequence is that of Translation initiation factor IF-1 from Malacoplasma penetrans (strain HF-2) (Mycoplasma penetrans).